Consider the following 57-residue polypeptide: MAVPKKRTSISKKRIRKNIWKLKGHWAAKKAISLAKSISTGNSKSFFVQQTSNKVLE.

It belongs to the bacterial ribosomal protein bL32 family.

The protein localises to the plastid. The protein resides in the chloroplast. The protein is Large ribosomal subunit protein bL32c of Nandina domestica (Heavenly bamboo).